A 495-amino-acid polypeptide reads, in one-letter code: MSVALWQQCLNFLQDELSSQQFNTWIRPLQAEDGDANELCLLAPNRFVRDWVNDKYLKRINELLRDLASGKPPKVQLTVGSRRNVAMSSPRDLGAPVSATTMNASRPTEAPAVHAAPRAKGDYADEQEIDRLREREETPRRGGGERQVQVEGSLKHQSGLNPNFTFETFVEGKSNQLARAASRQVAENPGGAYNPLFLYGGVGLGKTHLMHAVGNHLAGQRENAKVVYLHSERFVADMVKALQLNAINDFKRFYRSVDALLIDDIQFFAGKERSQEEFFHTFNALLEGGQQMILTSDRYPKEISGVEERLKSRFGWGLTVAIEPPELETRVAILMKKADQAKVDLPHDAAFFIAQKIRSNVRELEGALKKVIADSHFMGKPITQDFIRESLKDLLALQDKQVGVDNIQRTVAEYYKIKLADLLSKRRSRSVARPRQVAMALAKELTNHSLPEIGDAFGGRDHTTVLHACRKVQTLKEESADIREDYKNLLRLLTS.

The tract at residues 1–83 is domain I, interacts with DnaA modulators; it reads MSVALWQQCL…KVQLTVGSRR (83 aa). The tract at residues 83–158 is domain II; that stretch reads RNVAMSSPRD…QVEGSLKHQS (76 aa). Residues 86–127 are disordered; it reads AMSSPRDLGAPVSATTMNASRPTEAPAVHAAPRAKGDYADEQ. Residues 159-375 form a domain III, AAA+ region region; the sequence is GLNPNFTFET…GALKKVIADS (217 aa). Residues Gly203, Gly205, Lys206, and Thr207 each contribute to the ATP site. The segment at 376–495 is domain IV, binds dsDNA; sequence HFMGKPITQD…YKNLLRLLTS (120 aa).

Belongs to the DnaA family. In terms of assembly, oligomerizes as a right-handed, spiral filament on DNA at oriC.

It is found in the cytoplasm. Its function is as follows. Plays an essential role in the initiation and regulation of chromosomal replication. ATP-DnaA binds to the origin of replication (oriC) to initiate formation of the DNA replication initiation complex once per cell cycle. Binds the DnaA box (a 9 base pair repeat at the origin) and separates the double-stranded (ds)DNA. Forms a right-handed helical filament on oriC DNA; dsDNA binds to the exterior of the filament while single-stranded (ss)DNA is stabiized in the filament's interior. The ATP-DnaA-oriC complex binds and stabilizes one strand of the AT-rich DNA unwinding element (DUE), permitting loading of DNA polymerase. After initiation quickly degrades to an ADP-DnaA complex that is not apt for DNA replication. Binds acidic phospholipids. The sequence is that of Chromosomal replication initiator protein DnaA from Chromohalobacter salexigens (strain ATCC BAA-138 / DSM 3043 / CIP 106854 / NCIMB 13768 / 1H11).